A 380-amino-acid polypeptide reads, in one-letter code: Probable protein phosphatase 2C 63 (380 aa).

One can recognise a PPM-type phosphatase domain in the interval 35-338; it reads DYSIAVVQAN…DDISVIVVYL (304 aa). 4 residues coordinate Mn(2+): D66, G67, D270, and D329.

Belongs to the PP2C family. Requires Mg(2+) as cofactor. It depends on Mn(2+) as a cofactor.

It carries out the reaction O-phospho-L-seryl-[protein] + H2O = L-seryl-[protein] + phosphate. The catalysed reaction is O-phospho-L-threonyl-[protein] + H2O = L-threonyl-[protein] + phosphate. May dephosphorylate and repress plasma membrane H(+)-ATPases (PM H(+)-ATPases, e.g. AHA1 and AHA2), thus influencing negatively plant growth and fitness. The protein is Probable protein phosphatase 2C 63 of Arabidopsis thaliana (Mouse-ear cress).